A 394-amino-acid chain; its full sequence is Elongation factor Tu-A (394 aa).

One can recognise a tr-type G domain in the interval 10 to 204 (KPHVNVGTIG…ALDTYIPEPE (195 aa)). Residues 19–26 (GHVDHGKT) are G1. 19 to 26 (GHVDHGKT) lines the GTP pocket. Threonine 26 provides a ligand contact to Mg(2+). Positions 60–64 (GITIN) are G2. The G3 stretch occupies residues 81 to 84 (DCPG). Residues 81–85 (DCPGH) and 136–139 (NKCD) each bind GTP. Residues 136 to 139 (NKCD) are G4. The G5 stretch occupies residues 174 to 176 (SAL).

It belongs to the TRAFAC class translation factor GTPase superfamily. Classic translation factor GTPase family. EF-Tu/EF-1A subfamily. Monomer.

The protein resides in the cytoplasm. It catalyses the reaction GTP + H2O = GDP + phosphate + H(+). Its function is as follows. GTP hydrolase that promotes the GTP-dependent binding of aminoacyl-tRNA to the A-site of ribosomes during protein biosynthesis. In Vibrio cholerae serotype O1 (strain ATCC 39315 / El Tor Inaba N16961), this protein is Elongation factor Tu-A.